Consider the following 72-residue polypeptide: MSKDDVIEMQGTVLEALPNAMFQIQLESGQTILGHVSGKLRMNFIRILPGDKVTVELSPYDLSRGRITWRAK.

The 72-residue stretch at Met-1–Lys-72 folds into the S1-like domain.

Belongs to the IF-1 family. In terms of assembly, component of the 30S ribosomal translation pre-initiation complex which assembles on the 30S ribosome in the order IF-2 and IF-3, IF-1 and N-formylmethionyl-tRNA(fMet); mRNA recruitment can occur at any time during PIC assembly.

The protein resides in the cytoplasm. Functionally, one of the essential components for the initiation of protein synthesis. Stabilizes the binding of IF-2 and IF-3 on the 30S subunit to which N-formylmethionyl-tRNA(fMet) subsequently binds. Helps modulate mRNA selection, yielding the 30S pre-initiation complex (PIC). Upon addition of the 50S ribosomal subunit IF-1, IF-2 and IF-3 are released leaving the mature 70S translation initiation complex. This chain is Translation initiation factor IF-1, found in Clostridium novyi (strain NT).